The sequence spans 264 residues: Proteasome subunit beta type-5 (264 aa).

Positions 1–59 (MALASVLQRPMPVNQHGFFGLGGGADLLDLGPGSPGDGLSLAAPSWGVPEEPRIEMLHG) are cleaved as a propeptide — removed in mature form. Thr-60 (nucleophile) is an active-site residue. Ala-108 is a binding site for bortezomib.

The protein belongs to the peptidase T1B family. In terms of assembly, the 26S proteasome consists of a 20S proteasome core and two 19S regulatory subunits. The 20S proteasome core is a barrel-shaped complex made of 28 subunits that are arranged in four stacked rings. The two outer rings are each formed by seven alpha subunits, and the two inner rings are formed by seven beta subunits. The proteolytic activity is exerted by three beta-subunits PSMB5, PSMB6 and PSMB7. Directly interacts with POMP. Interacts with ABCB1 and TAP1. In terms of tissue distribution, expressed in uterus at the embryo implantation site.

The protein localises to the cytoplasm. The protein resides in the nucleus. It carries out the reaction Cleavage of peptide bonds with very broad specificity.. Its function is as follows. Component of the 20S core proteasome complex involved in the proteolytic degradation of most intracellular proteins. This complex plays numerous essential roles within the cell by associating with different regulatory particles. Associated with two 19S regulatory particles, forms the 26S proteasome and thus participates in the ATP-dependent degradation of ubiquitinated proteins. The 26S proteasome plays a key role in the maintenance of protein homeostasis by removing misfolded or damaged proteins that could impair cellular functions, and by removing proteins whose functions are no longer required. Associated with the PA200 or PA28, the 20S proteasome mediates ubiquitin-independent protein degradation. This type of proteolysis is required in several pathways including spermatogenesis (20S-PA200 complex) or generation of a subset of MHC class I-presented antigenic peptides (20S-PA28 complex). Within the 20S core complex, PSMB5 displays a chymotrypsin-like activity. The protein is Proteasome subunit beta type-5 (Psmb5) of Mus musculus (Mouse).